The following is a 116-amino-acid chain: Large ribosomal subunit protein bL19 (116 aa).

The protein belongs to the bacterial ribosomal protein bL19 family.

Its function is as follows. This protein is located at the 30S-50S ribosomal subunit interface and may play a role in the structure and function of the aminoacyl-tRNA binding site. This Mycoplasma mobile (strain ATCC 43663 / 163K / NCTC 11711) (Mesomycoplasma mobile) protein is Large ribosomal subunit protein bL19.